Here is a 150-residue protein sequence, read N- to C-terminus: uncharacterized protein (150 aa).

An N-terminal signal peptide occupies residues 1–28; sequence MPLDVWIAFSYFIDFFQWLFMLNAEVMR.

This is an uncharacterized protein from Archaeoglobus fulgidus (strain ATCC 49558 / DSM 4304 / JCM 9628 / NBRC 100126 / VC-16).